A 179-amino-acid polypeptide reads, in one-letter code: Pectinesterase inhibitor 5 (179 aa).

A signal peptide spans 1-25; sequence MATMLINHMLFLTSLLIVVFPVANA. Cystine bridges form between Cys35–Cys44 and Cys101–Cys141.

It belongs to the PMEI family. Expressed in seeds, buds, and mature flowers.

The protein localises to the secreted. It localises to the extracellular space. Its subcellular location is the apoplast. Functionally, pectin methylesterase (PME) inhibitor that targets PME from seeds and modulates PME activity and pectin methylesterification during seed germination. The sequence is that of Pectinesterase inhibitor 5 from Arabidopsis thaliana (Mouse-ear cress).